The chain runs to 579 residues: Arginine--tRNA ligase (579 aa).

The 'HIGH' region motif lies at 127 to 137 (PNLAKEMHVGH).

Belongs to the class-I aminoacyl-tRNA synthetase family. In terms of assembly, monomer.

The protein localises to the cytoplasm. It catalyses the reaction tRNA(Arg) + L-arginine + ATP = L-arginyl-tRNA(Arg) + AMP + diphosphate. In Azotobacter vinelandii (strain DJ / ATCC BAA-1303), this protein is Arginine--tRNA ligase.